The chain runs to 143 residues: Transcriptional regulator MraZ (143 aa).

SpoVT-AbrB domains are found at residues 5–47 (EYKH…PMHE) and 76–119 (ATEC…SSKR).

It belongs to the MraZ family. Forms oligomers.

It is found in the cytoplasm. The protein resides in the nucleoid. This is Transcriptional regulator MraZ from Halothermothrix orenii (strain H 168 / OCM 544 / DSM 9562).